The chain runs to 1217 residues: Splicing factor 3B subunit 3 (1217 aa).

2 interaction with PHF5A, SF3B1 and SF3B5 regions span residues 105–119 (ETFGKSGCRRIVPGQ) and 145–168 (NRDAAARLTISSPLEAHKANTLVY). S156 carries the post-translational modification Phosphoserine. Interaction with SF3B1 and SF3B5 stretches follow at residues 193-231 (DNDPTGEAAANTQQTLTFYELDLGLNHVVRKYSEPLEEH) and 786-804 (RKFVIHPESNNLIIIETDH). The tract at residues 1028-1049 (TYPRWVTTASLLDYDTVAGADK) is interaction with SF3B1. Positions 1100 to 1123 (TVLSLQKTTLIPGGSESLVYTTLS) are interaction with SF3B5. Phosphothreonine is present on T1200.

It belongs to the RSE1 family. In terms of assembly, component of the 17S U2 SnRNP complex, a ribonucleoprotein complex that contains small nuclear RNA (snRNA) U2 and a number of specific proteins. Part of the SF3B subcomplex of the 17S U2 SnRNP complex. SF3B associates with the splicing subcomplex SF3A and a 12S RNA unit to form the U2 small nuclear ribonucleoproteins complex (U2 snRNP). Within the SF3B subcomplex, interacts directly with SF3B1 (via HEAT domain), SF3B5 and PHF5A. Identified in the spliceosome A complex; remains associated with the spliceosome throughout the splicing process. Component of the spliceosome B complex. Identified in the spliceosome C complex. Identified in the spliceosome E complex. Component of the minor (U12-type spliceosome) spliceosome. Within this complex, interacts with SCNM1. Associates with the STAGA transcription coactivator-HAT complex. Interacts with SUPT3H. Interacts with TAF3.

It is found in the nucleus. Its function is as follows. Component of the 17S U2 SnRNP complex of the spliceosome, a large ribonucleoprotein complex that removes introns from transcribed pre-mRNAs. The 17S U2 SnRNP complex (1) directly participates in early spliceosome assembly and (2) mediates recognition of the intron branch site during pre-mRNA splicing by promoting the selection of the pre-mRNA branch-site adenosine, the nucleophile for the first step of splicing. Within the 17S U2 SnRNP complex, SF3B3 is part of the SF3B subcomplex, which is required for 'A' complex assembly formed by the stable binding of U2 snRNP to the branchpoint sequence in pre-mRNA. Sequence independent binding of SF3A and SF3B subcomplexes upstream of the branch site is essential, it may anchor U2 snRNP to the pre-mRNA. May also be involved in the assembly of the 'E' complex. Also acts as a component of the minor spliceosome, which is involved in the splicing of U12-type introns in pre-mRNAs. This chain is Splicing factor 3B subunit 3 (SF3B3), found in Bos taurus (Bovine).